The sequence spans 270 residues: MAAWAERLSGVRGVLLDISGVLYDSGTGGGAAIAGSVEAVARLKRSPLKVRFCTNESQKSRRELVGVLQRLGFDISEGEVTAPAPATCQILKERGLRPHLLIHEGVRSEFDDIDMSNPNCVVIADAGEGFSYQNMNRAFQVLMELENPVLISLGKGRYYKETSGLMLDVGGYMKALEYACGIEAEVVGKPSPEFFRSALQAIGVEAHQAIMIGDDIVGDVGGAQQCGMRALQVRTGKFRPGDEHHPEVRADGYVDNLAEAVDLLLQHMDK.

Positions 17 and 19 each coordinate Mg(2+). Residues 17–19 (DIS), 54–55 (TN), and Lys189 contribute to the substrate site. Asp214 is a binding site for Mg(2+).

Belongs to the HAD-like hydrolase superfamily. Homodimer. It depends on Mg(2+) as a cofactor.

The protein localises to the cytoplasm. It is found in the nucleus. The catalysed reaction is diphosphate + H2O = 2 phosphate + H(+). Its function is as follows. Phosphatase that hydrolyzes imidodiphosphate, 3-phosphohistidine and 6-phospholysine. Has broad substrate specificity and can also hydrolyze inorganic diphosphate, but with lower efficiency. This chain is Phospholysine phosphohistidine inorganic pyrophosphate phosphatase (Lhpp), found in Rattus norvegicus (Rat).